We begin with the raw amino-acid sequence, 515 residues long: Anthranilate synthase component 1 (515 aa).

Residues Ser50 and 281 to 283 each bind L-tryptophan; that span reads PYM. A chorismate-binding site is contributed by 316-317; sequence GT. Glu343 lines the Mg(2+) pocket. Chorismate is bound by residues Tyr431, Arg451, 465–467, and Gly467; that span reads GAG. Glu480 is a binding site for Mg(2+).

This sequence belongs to the anthranilate synthase component I family. Heterotetramer consisting of two non-identical subunits: a beta subunit (TrpG) and a large alpha subunit (TrpE). The cofactor is Mg(2+).

It carries out the reaction chorismate + L-glutamine = anthranilate + pyruvate + L-glutamate + H(+). The protein operates within amino-acid biosynthesis; L-tryptophan biosynthesis; L-tryptophan from chorismate: step 1/5. With respect to regulation, feedback inhibited by tryptophan. In terms of biological role, part of a heterotetrameric complex that catalyzes the two-step biosynthesis of anthranilate, an intermediate in the biosynthesis of L-tryptophan. In the first step, the glutamine-binding beta subunit (TrpG) of anthranilate synthase (AS) provides the glutamine amidotransferase activity which generates ammonia as a substrate that, along with chorismate, is used in the second step, catalyzed by the large alpha subunit of AS (TrpE) to produce anthranilate. In the absence of TrpG, TrpE can synthesize anthranilate directly from chorismate and high concentrations of ammonia. The chain is Anthranilate synthase component 1 (trpE) from Bacillus subtilis (strain 168).